A 1384-amino-acid polypeptide reads, in one-letter code: Sterol 3-beta-glucosyltransferase (1384 aa).

Disordered stretches follow at residues 1–64 (MPNM…DGQL), 86–189 (ARFD…TPRA), and 204–229 (DKKQ…QSCA). The segment covering 7–19 (LLEDAKRRVDRRL) has biased composition (basic and acidic residues). Residues 21 to 36 (ASRQSISSSRIFSSAF) are compositionally biased toward low complexity. The span at 38-47 (DRLKDDHDAQ) shows a compositional bias: basic and acidic residues. Over residues 146 to 156 (LRSLKPSPKSS) the composition is skewed to low complexity. Polar residues predominate over residues 158–172 (GTETTVQTEPPTSDE). Over residues 174–189 (SPLASPRRARSATPRA) the composition is skewed to low complexity. The span at 209–229 (ADQPSSSTKGETDGTSEQSCA) shows a compositional bias: polar residues. Residues 237–284 (KEMFGFEMPEKVLMEYACSLLQNILLQGYMYVTEGHICFYAYLPRKSA) enclose the GRAM 1 domain. The PH domain maps to 285–384 (VTIRSGYLHK…WVKALQKVIF (100 aa)). 2 disordered regions span residues 457 to 526 (MKTS…RQRD) and 560 to 629 (NRSD…VNSS). Composition is skewed to polar residues over residues 458–473 (KTSQ…TSPA), 483–494 (WSLNSDLSQSRG), and 560–572 (NRSD…TIHT). Residues 578–588 (PSGDRTGRRLS) are compositionally biased toward basic and acidic residues. Polar residues predominate over residues 604–629 (RNGQEMQYASSDSDQGTQHPSKVNSS). Residues 714–817 (RFRAHFALPS…RDDCAVTVHQ (104 aa)) form the GRAM 2 domain. UDP-alpha-D-glucose-binding residues include serine 901, arginine 902, aspartate 904, alanine 1204, histidine 1206, histidine 1219, glycine 1223, threonine 1224, aspartate 1243, and glutamine 1244. The span at 1322–1336 (VSSTPFSPTPSAKTT) shows a compositional bias: polar residues. Positions 1322-1350 (VSSTPFSPTPSAKTTAEQEEDDVDDSEEW) are disordered. Positions 1338-1350 (EQEEDDVDDSEEW) are enriched in acidic residues.

The protein belongs to the glycosyltransferase 28 family.

Its subcellular location is the cytoplasm. It localises to the preautophagosomal structure membrane. It carries out the reaction a sterol + UDP-alpha-D-glucose = a sterol 3-beta-D-glucoside + UDP + H(+). The enzyme catalyses ergosterol + UDP-alpha-D-glucose = ergosteryl 3-beta-D-glucoside + UDP + H(+). Functionally, sterol glycosyltransferase responsible for the glycosylation of ergosterol to form ergosterol-glucoside. Involved in cytoplasm to vacuole transport (Cvt), pexophagy or nonselective autophagy. The chain is Sterol 3-beta-glucosyltransferase from Aspergillus oryzae (strain ATCC 42149 / RIB 40) (Yellow koji mold).